A 288-amino-acid polypeptide reads, in one-letter code: MTFQDIILTLQKYWAEKGCVLVQPYDMEVGAGTFHPETLLRSLGPEPWKTAYVQPSRRPTDGRYGENPNRLQHYYQFQVIIKPSPDDVQGLYLDSLKAIGIDPLAHDIRFVEDDWESPTLGAAGLGWEVWLDGMEITQFTYFQLAGSIELSPVTVELTYGLERIAMYLQEIDNVYELDWNGVVKYGDLHHMNEVEQSTYNFEVANVDMLLGFFDSYEAEAKACLEKELVLPAYEYCLKCSHTFNLLDARGAISVTERTGYIARIRNMARGCAEKYLEQRESMGFPLAK.

It belongs to the class-II aminoacyl-tRNA synthetase family. In terms of assembly, tetramer of two alpha and two beta subunits.

It is found in the cytoplasm. The catalysed reaction is tRNA(Gly) + glycine + ATP = glycyl-tRNA(Gly) + AMP + diphosphate. The protein is Glycine--tRNA ligase alpha subunit of Desulfatibacillum aliphaticivorans.